A 226-amino-acid chain; its full sequence is Thioredoxin domain-containing protein 9 (226 aa).

The 106-residue stretch at 75 to 180 (EIGSERDFFQ…TTETLEWRLG (106 aa)) folds into the Thioredoxin domain. A phosphoserine mark is found at Ser188, Ser221, and Ser223.

Forms ternary complexes with the chaperonin TCP1 complex, spanning the cylindrical chaperonin cavity and contacting at least 2 subunits.

The protein resides in the cytoplasm. The protein localises to the nucleus. Its subcellular location is the cytoskeleton. It is found in the microtubule organizing center. It localises to the centrosome. The protein resides in the midbody. Functionally, significantly diminishes the chaperonin TCP1 complex ATPase activity, thus negatively impacts protein folding, including that of actin or tubulin. The polypeptide is Thioredoxin domain-containing protein 9 (Txndc9) (Rattus norvegicus (Rat)).